A 542-amino-acid chain; its full sequence is Carboxypeptidase Y homolog A (542 aa).

The signal sequence occupies residues 1-17 (MRVLPATLLVGAASAAV). The propeptide occupies 18-123 (PPLQQVLGRP…KLEAYDLRIK (106 aa)). 5 cysteine pairs are disulfide-bonded: cysteine 178-cysteine 418, cysteine 312-cysteine 326, cysteine 336-cysteine 359, cysteine 343-cysteine 352, and cysteine 381-cysteine 388. An N-linked (GlcNAc...) asparagine glycan is attached at asparagine 209. Serine 265 is a catalytic residue. Residue aspartate 457 is part of the active site. N-linked (GlcNAc...) asparagine glycosylation is present at asparagine 508. Histidine 519 is a catalytic residue.

The protein belongs to the peptidase S10 family.

The protein resides in the vacuole. The catalysed reaction is Release of a C-terminal amino acid with broad specificity.. Vacuolar carboxypeptidase involved in degradation of small peptides. Digests preferentially peptides containing an aliphatic or hydrophobic residue in P1' position, as well as methionine, leucine or phenylalanine in P1 position of ester substrate. In Aspergillus oryzae (strain ATCC 42149 / RIB 40) (Yellow koji mold), this protein is Carboxypeptidase Y homolog A (cpyA).